We begin with the raw amino-acid sequence, 558 residues long: MSAELAPPPPLAPGGLRVTALGGISEIGRNMTVFEHLGRLLIVDCGVLFPGHDEPGVDLILPDLRHIEDRLDEIEALVVTHAHEDHIGAIPFLLKLRPDIPVVGSKFTIALVREKCREHRLKPKFVEVAERQSSQHGVFECEYFAVNHSIPGCLAVAIHTGAGTVLHTGDIKLDQLPLDGRPTDLPGMSRLGDAGVDLFLCDSTNSEHPGVSPSESEVGPTLHRLIRGAEGRVIVACFASNVDRVQQIIDAAVALGRRVSFVGRSMVRNMGIARELGYLKVDDSDILDIAAAEMMPPDRVVLITTGTQGEPMAALSRMSRGEHRSITLTSGDLIILSSSLIPGNEEAVYGVIDSLSKIGARVVTNAQARVHVSGHAYAGELLFLYNGVRPRNVMPVHGTWRHLRANAALAASTGVPPENIVLAENGVSVDLVAGRASISGAVTVGKMFVDGLITGDVGDATLGERLILSSGFVSITVVVHRGTGRPAGPAHLISRGFSEDPKALEPVAQKVERELEALAADNVTDPTRIAQAVRRTVGKWVGETYRRQPMIVPTVIEI.

Zn(2+) contacts are provided by His-81, His-83, Asp-85, His-86, His-148, and Asp-170. A substrate-binding site is contributed by 371–375 (HVSGH). A Zn(2+)-binding site is contributed by His-397.

Belongs to the metallo-beta-lactamase superfamily. RNA-metabolizing metallo-beta-lactamase-like family. Bacterial RNase J subfamily. Homodimer. The cofactor is Zn(2+).

It is found in the cytoplasm. An RNase that has endonuclease and 5'-3' exonuclease activity. The 5'-exonuclease activity acts on 5'-monophosphate but not 5'-triphosphate ends. Endonuclease activity can cleave within 4 nucleotides of the 5'-end of a triphosphorylated RNA. Plays the major role in pre-23S rRNA maturation, and a minor role in processing of pre-5S and pre-16S rRNA. This Mycolicibacterium smegmatis (strain ATCC 700084 / mc(2)155) (Mycobacterium smegmatis) protein is Ribonuclease J.